A 569-amino-acid chain; its full sequence is Adenine deaminase 1 (569 aa).

It belongs to the metallo-dependent hydrolases superfamily. Adenine deaminase family. Mn(2+) is required as a cofactor.

The catalysed reaction is adenine + H2O + H(+) = hypoxanthine + NH4(+). The polypeptide is Adenine deaminase 1 (Rhizobium johnstonii (strain DSM 114642 / LMG 32736 / 3841) (Rhizobium leguminosarum bv. viciae)).